We begin with the raw amino-acid sequence, 140 residues long: Small ribosomal subunit protein uS19 (140 aa).

A disordered region spans residues 120 to 140; sequence RPKHSAPGIGATRSSAHVSKK. Over residues 131–140 the composition is skewed to polar residues; that stretch reads TRSSAHVSKK.

Belongs to the universal ribosomal protein uS19 family.

Protein S19 forms a complex with S13 that binds strongly to the 16S ribosomal RNA. The polypeptide is Small ribosomal subunit protein uS19 (Nanoarchaeum equitans (strain Kin4-M)).